Consider the following 317-residue polypeptide: 4-diphosphocytidyl-2-C-methyl-D-erythritol kinase (317 aa).

The active site involves Lys-17. Position 109 to 119 (109 to 119) interacts with ATP; the sequence is PVAGGMGGGSA. Asp-151 is a catalytic residue.

Belongs to the GHMP kinase family. IspE subfamily.

It catalyses the reaction 4-CDP-2-C-methyl-D-erythritol + ATP = 4-CDP-2-C-methyl-D-erythritol 2-phosphate + ADP + H(+). The protein operates within isoprenoid biosynthesis; isopentenyl diphosphate biosynthesis via DXP pathway; isopentenyl diphosphate from 1-deoxy-D-xylulose 5-phosphate: step 3/6. Functionally, catalyzes the phosphorylation of the position 2 hydroxy group of 4-diphosphocytidyl-2C-methyl-D-erythritol. The polypeptide is 4-diphosphocytidyl-2-C-methyl-D-erythritol kinase (Paenarthrobacter aurescens (strain TC1)).